We begin with the raw amino-acid sequence, 688 residues long: Elongation factor G (688 aa).

A tr-type G domain is found at 8 to 282 (EKTRNIGIIA…AIVDYLPAPC (275 aa)). GTP is bound by residues 17 to 24 (AHIDAGKT), 81 to 85 (DTPGH), and 135 to 138 (NKMD).

The protein belongs to the TRAFAC class translation factor GTPase superfamily. Classic translation factor GTPase family. EF-G/EF-2 subfamily.

Its subcellular location is the cytoplasm. Functionally, catalyzes the GTP-dependent ribosomal translocation step during translation elongation. During this step, the ribosome changes from the pre-translocational (PRE) to the post-translocational (POST) state as the newly formed A-site-bound peptidyl-tRNA and P-site-bound deacylated tRNA move to the P and E sites, respectively. Catalyzes the coordinated movement of the two tRNA molecules, the mRNA and conformational changes in the ribosome. This Onion yellows phytoplasma (strain OY-M) protein is Elongation factor G.